A 340-amino-acid polypeptide reads, in one-letter code: Phosphoribosylformylglycinamidine cyclo-ligase (340 aa).

Belongs to the AIR synthase family.

It is found in the cytoplasm. The enzyme catalyses 2-formamido-N(1)-(5-O-phospho-beta-D-ribosyl)acetamidine + ATP = 5-amino-1-(5-phospho-beta-D-ribosyl)imidazole + ADP + phosphate + H(+). The protein operates within purine metabolism; IMP biosynthesis via de novo pathway; 5-amino-1-(5-phospho-D-ribosyl)imidazole from N(2)-formyl-N(1)-(5-phospho-D-ribosyl)glycinamide: step 2/2. The polypeptide is Phosphoribosylformylglycinamidine cyclo-ligase (Streptococcus pneumoniae serotype 2 (strain D39 / NCTC 7466)).